The following is a 47-amino-acid chain: Defensin-2 (47 aa).

4 disulfides stabilise this stretch: cysteine 3–cysteine 47, cysteine 14–cysteine 35, cysteine 20–cysteine 41, and cysteine 24–cysteine 43.

It belongs to the DEFL family. As to expression, epidermis and vascular bundles of pods, stems, roots, leaves and wet or dry seeds.

Its function is as follows. Possesses antifungal activity sensitive to inorganic cations. This chain is Defensin-2, found in Pisum sativum (Garden pea).